Consider the following 371-residue polypeptide: Neuropeptide S receptor (371 aa).

Residues 1–52 lie on the Extracellular side of the membrane; it reads MPANFTEGSFDSNGTGQMLDSSPVACTETVTFTEVVEGKEWGSFYYSFKTEQ. N-linked (GlcNAc...) asparagine glycosylation is found at Asn4 and Asn13. A helical transmembrane segment spans residues 53-73; it reads LITLWVLFVFTIVGNSVVLFS. At 74 to 82 the chain is on the cytoplasmic side; that stretch reads TWRRKRKSR. The helical transmembrane segment at 83-103 threads the bilayer; it reads MTFFVTQLAITDSFTGLVNIL. Over 104 to 123 the chain is Extracellular; it reads TDIIWRFTGDFMAPDLVCRV. A disulfide bridge connects residues Cys121 and Cys197. Residues 124–144 form a helical membrane-spanning segment; that stretch reads VRYLQVVLLYASTYVLVSLSI. Residues 145 to 164 are Cytoplasmic-facing; sequence DRYHAIVYPMKFLQGEKQAK. A helical membrane pass occupies residues 165 to 185; it reads VLIVIAWSLSFLFSIPTLIIF. At 186 to 212 the chain is on the extracellular side; that stretch reads GKRTLSNGEVQCWALWPDDSYWTPYMT. A helical membrane pass occupies residues 213-233; it reads IVAFLVYFIPLTIISVMYGIV. Topologically, residues 234–275 are cytoplasmic; sequence IRTIWIKSKTYETVISNCSDGKLCSSYNRGLISKAKIKAIKY. A helical membrane pass occupies residues 276–296; sequence SIVIILAFICCWSPYFLFDIL. Topologically, residues 297 to 312 are extracellular; it reads DNFNLLPDTQERFYAS. The helical transmembrane segment at 313–333 threads the bilayer; it reads VIIQNLPALNSAINPLIYCVF. Over 334-371 the chain is Cytoplasmic; it reads SSSISFPCGERRSQDSIMTFRERTERHEMQILSKPEFI.

It belongs to the G-protein coupled receptor 1 family. Vasopressin/oxytocin receptor subfamily.

The protein localises to the cell membrane. Functionally, G-protein coupled receptor for neuropeptide S (NPS). Promotes mobilization of intracellular Ca(2+) stores. Inhibits cell growth in response to NPS binding. Involved in pathogenesis of asthma and other IgE-mediated diseases. The chain is Neuropeptide S receptor (NPSR1) from Macaca mulatta (Rhesus macaque).